The chain runs to 130 residues: Small ribosomal subunit protein uS11c (130 aa).

This sequence belongs to the universal ribosomal protein uS11 family. In terms of assembly, part of the 30S ribosomal subunit.

The protein localises to the plastid. The protein resides in the chloroplast. The protein is Small ribosomal subunit protein uS11c of Chara vulgaris (Common stonewort).